The following is a 164-amino-acid chain: MTSTNTRNKGKCIVEGPPPTLSRYESQKSRDWNTFCQYLMTKMPPVHVWECESNHILDFLQSRDQFGKTKVHIQGCVFFGQKEPPGECNCPLKQAWGSLDALIGRLRAAYEENGGLTEKNPFARGGIRIFLREVRGSQAKARGVLYKKKKRLVVVGTGTSTTWT.

The ALOG domain maps to 23-150; the sequence is RYESQKSRDW…ARGVLYKKKK (128 aa). Positions 148-152 match the Nuclear localization signal motif; sequence KKKRL.

This sequence belongs to the plant homeotic and developmental regulators ALOG protein family.

It is found in the nucleus. Probable transcription regulator that acts as a developmental regulator by promoting cell growth in response to light. The chain is Protein LIGHT-DEPENDENT SHORT HYPOCOTYLS 8 (LSH8) from Arabidopsis thaliana (Mouse-ear cress).